The chain runs to 343 residues: Methionine synthase (343 aa).

Residues His211, Cys213, Glu236, and Cys315 each contribute to the Zn(2+) site.

It belongs to the archaeal MetE family. Requires Zn(2+) as cofactor.

Its pathway is amino-acid biosynthesis; L-methionine biosynthesis via de novo pathway. Its function is as follows. Catalyzes the transfer of a methyl group to L-homocysteine resulting in methionine formation. The physiological methyl donor is unknown. The sequence is that of Methionine synthase from Thermoplasma acidophilum (strain ATCC 25905 / DSM 1728 / JCM 9062 / NBRC 15155 / AMRC-C165).